A 222-amino-acid polypeptide reads, in one-letter code: Cytidylate kinase (222 aa).

7–15 (GPSASGKST) contacts ATP.

The protein belongs to the cytidylate kinase family. Type 1 subfamily.

It localises to the cytoplasm. The enzyme catalyses CMP + ATP = CDP + ADP. The catalysed reaction is dCMP + ATP = dCDP + ADP. This is Cytidylate kinase from Aquifex aeolicus (strain VF5).